We begin with the raw amino-acid sequence, 419 residues long: MGESFLLLQPASPALSPTPSSLLLGPTITMRADVLIAALATGALVAAVPTSPKKPTPPKGDVSNPFVGKTQFVNPEWSNKLTQTYKSFLKKGDVKNAFRTLQAQKVSTFVWVSRLSELSRIDEAIATARRVQKTTGKKQIVGLVLYNLPDRDCSAGESAGELLSGENGFERYKEEFVKPYAQKVAAAKDLEFAIVLEPDSLGNLVTNLNIPLCAGAVDTYRDGIAHAITQLQQDHVHLYIDAAHGGWLGWNDNLPLAADEFAEVLKRADEASGKKNKIRGFATNVSNYNPLHAVVRENYTEWSNSWDESHYASSLAPHLEERGLPAHFIVDQGRVANPGARKEWGEWCNVAPSGFGPAPSTNTNNTVVDAIVWIKPGGESDGECGYFNAPRAGHWHDEFAQQLVQNAHPSVYENWWKFW.

A signal peptide spans 1-47 (MGESFLLLQPASPALSPTPSSLLLGPTITMRADVLIAALATGALVAA). Substrate is bound by residues W111 and S113. Active-site proton donor residues include D152 and D199. Substrate is bound at residue W247. N-linked (GlcNAc...) asparagine glycosylation occurs at N284. N287 is a substrate binding site. N-linked (GlcNAc...) asparagine glycosylation occurs at N298. Position 347 (W347) interacts with substrate. N-linked (GlcNAc...) asparagine glycosylation occurs at N364. 2 residues coordinate substrate: K375 and E379.

This sequence belongs to the glycosyl hydrolase 6 (cellulase B) family. In terms of processing, both N- and O-glycosylated.

It localises to the secreted. The enzyme catalyses Hydrolysis of (1-&gt;4)-beta-D-glucosidic linkages in cellulose and cellotetraose, releasing cellobiose from the non-reducing ends of the chains.. Functionally, exoglucanase that plays an important function in biomass degradation by catalyzing the hydrolysis of the non-reducing end beta-1,4-glucosidic linkages in cellulose and cellotetraose to release cellobiose. Hydrolyzes crystalline and amorphous cellulose but is inactive on hydroxyethyl cellulose, mannan, galactomannan, xyloglucan, arabinoxylan, arabinan, xylan, and pectin. The polypeptide is 1,4-beta-D-glucan cellobiohydrolase CEL6B (Podospora anserina (strain S / ATCC MYA-4624 / DSM 980 / FGSC 10383) (Pleurage anserina)).